A 365-amino-acid chain; its full sequence is Phospho-N-acetylmuramoyl-pentapeptide-transferase (365 aa).

10 helical membrane-spanning segments follow: residues 15–35, 51–71, 96–116, 121–141, 156–176, 180–200, 217–237, 238–258, 279–299, and 344–364; these read PSGT…AVLI, VPVL…VPLL, TMGG…FAGF, IAVA…DWQV, LILQ…TAPE, ITFF…LAGF, GLAG…ALPA, HPGL…FIYH, LAAA…SGIF, and TQIV…SFIL.

The protein belongs to the glycosyltransferase 4 family. MraY subfamily. Requires Mg(2+) as cofactor.

It localises to the cell inner membrane. The enzyme catalyses UDP-N-acetyl-alpha-D-muramoyl-L-alanyl-gamma-D-glutamyl-meso-2,6-diaminopimeloyl-D-alanyl-D-alanine + di-trans,octa-cis-undecaprenyl phosphate = di-trans,octa-cis-undecaprenyl diphospho-N-acetyl-alpha-D-muramoyl-L-alanyl-D-glutamyl-meso-2,6-diaminopimeloyl-D-alanyl-D-alanine + UMP. It participates in cell wall biogenesis; peptidoglycan biosynthesis. In terms of biological role, catalyzes the initial step of the lipid cycle reactions in the biosynthesis of the cell wall peptidoglycan: transfers peptidoglycan precursor phospho-MurNAc-pentapeptide from UDP-MurNAc-pentapeptide onto the lipid carrier undecaprenyl phosphate, yielding undecaprenyl-pyrophosphoryl-MurNAc-pentapeptide, known as lipid I. This chain is Phospho-N-acetylmuramoyl-pentapeptide-transferase, found in Picosynechococcus sp. (strain ATCC 27264 / PCC 7002 / PR-6) (Agmenellum quadruplicatum).